A 223-amino-acid polypeptide reads, in one-letter code: Proteasome subunit beta type-1 (223 aa).

Belongs to the peptidase T1B family. Component of the 20S core complex of the 26S proteasome. The 26S proteasome is composed of a core protease (CP), known as the 20S proteasome, capped at one or both ends by the 19S regulatory particle (RP/PA700). The 20S proteasome core is composed of 28 subunits that are arranged in four stacked rings, resulting in a barrel-shaped structure. The two end rings are each formed by seven alpha subunits, and the two central rings are each formed by seven beta subunits. The catalytic chamber with the active sites is on the inside of the barrel. Present in all tissues examined. Slightly lower levels in roots.

It localises to the cytoplasm. Its subcellular location is the nucleus. Non-catalytic component of the proteasome, a multicatalytic proteinase complex which is characterized by its ability to cleave peptides with Arg, Phe, Tyr, Leu, and Glu adjacent to the leaving group at neutral or slightly basic pH. The proteasome has an ATP-dependent proteolytic activity. This is Proteasome subunit beta type-1 (PBF1) from Arabidopsis thaliana (Mouse-ear cress).